The sequence spans 272 residues: uncharacterized protein (272 aa).

Residues Asp71 and Glu163 contribute to the active site.

It belongs to the glycosyl hydrolase 25 family.

This is an uncharacterized protein from Escherichia coli O6:H1 (strain CFT073 / ATCC 700928 / UPEC).